Reading from the N-terminus, the 732-residue chain is Iron-sulfur clusters transporter ATM1, mitochondrial (732 aa).

A mitochondrion-targeting transit peptide spans 1-55 (MGFGSCSRHALFTPAAFSGSFTTMTTSCFKRVYTAQIHGGDALGKRLPSVSSFSG). Topologically, residues 56–143 (QLPRHGLHRQ…KNNPNVKFRV (88 aa)) are mitochondrial matrix. Residues 71-114 (STSHRRQTSPPPSPRTTSQSPTVPSKASTTPPTSLNTSKPIATE) are disordered. The segment covering 85–95 (RTTSQSPTVPS) has biased composition (low complexity). Over residues 96-114 (KASTTPPTSLNTSKPIATE) the composition is skewed to polar residues. The chain crosses the membrane as a helical span at residues 144-164 (IGALTLLVAGKVLNVQVPFFF). Positions 144 to 432 (IGALTLLVAG…LGTVYRELRQ (289 aa)) constitute an ABC transmembrane type-1 domain. At 165–181 (KTIVDSLNVPITESTTV) the chain is on the mitochondrial intermembrane side. A helical transmembrane segment spans residues 182–202 (WVLAGASIAGYGAARILTTLF). Residues 203-262 (GELRNAVFASVAQNAIRKVARETFEHLLNMDMKFHLERQTGGLTRAIDRGTKGISFILSS) are Mitochondrial matrix-facing. The chain crosses the membrane as a helical span at residues 263 to 283 (IVFHVIPTALEISMVCGILSW). K284 is a topological domain (mitochondrial intermembrane). A helical membrane pass occupies residues 285–305 (FGWDFAAVTAITMLLYTWFTI). At 306 to 378 (KTTAWRTTFR…SLAALNSGQN (73 aa)) the chain is on the mitochondrial matrix side. Residues 311-315 (RTTFR) and 374-377 (NSGQ) each bind glutathione. A helical transmembrane segment spans residues 379–399 (FIFSSALTMMMLLGAQGIVKG). The Mitochondrial intermembrane portion of the chain corresponds to 400 to 405 (TMTVGD). A helical membrane pass occupies residues 406-426 (LVLVNQLVFQLSLPLNFLGTV). G424 serves as a coordination point for glutathione. The Mitochondrial matrix segment spans residues 427 to 732 (YRELRQSLID…LEVVDEKKKQ (306 aa)). The ABC transporter domain occupies 466 to 702 (IEFRNVAFAY…PGGVYHRLWQ (237 aa)). ATP is bound by residues Y475 and 499–506 (GPSGCGKS). The segment at 708–732 (STQPTDEEIERQREELEVVDEKKKQ) is disordered. Residues 717-732 (ERQREELEVVDEKKKQ) are compositionally biased toward basic and acidic residues.

The protein belongs to the ABC transporter superfamily. ABCB family. Heavy Metal importer (TC 3.A.1.210) subfamily. Homodimer.

It localises to the mitochondrion inner membrane. Performs an essential function in the generation of cytoplasmic iron-sulfur proteins by mediating the ATP-dependent export of mitochondrial Fe/S cluster precursors synthesized by NFS1 and other mitochondrial proteins. Hydrolyzes ATP. Binds glutathione and may function by transporting a glutathione-conjugated iron-sulfur compound. Plays a role during copper stress, in a manner dependent on the copper metalloregulatory transcription factor CUF1. This chain is Iron-sulfur clusters transporter ATM1, mitochondrial, found in Cryptococcus neoformans var. grubii serotype A (strain H99 / ATCC 208821 / CBS 10515 / FGSC 9487) (Filobasidiella neoformans var. grubii).